Reading from the N-terminus, the 812-residue chain is Lon protease (812 aa).

In terms of domain architecture, Lon N-terminal spans 22 to 215; the sequence is YAVLPLRDIV…KALSFMEAEI (194 aa). Residue 367–374 participates in ATP binding; that stretch reads GPPGVGKT. The 182-residue stretch at 602-783 folds into the Lon proteolytic domain; sequence EDQVGVVTGL…GEVLKHTLVR (182 aa). Residues S689 and K732 contribute to the active site. Residues 787–812 are disordered; the sequence is PIEWTEQENPTAVPPVEDEAGASLAH.

Belongs to the peptidase S16 family. In terms of assembly, homohexamer. Organized in a ring with a central cavity.

The protein resides in the cytoplasm. The enzyme catalyses Hydrolysis of proteins in presence of ATP.. Its function is as follows. ATP-dependent serine protease that mediates the selective degradation of mutant and abnormal proteins as well as certain short-lived regulatory proteins. Required for cellular homeostasis and for survival from DNA damage and developmental changes induced by stress. Degrades polypeptides processively to yield small peptide fragments that are 5 to 10 amino acids long. Binds to DNA in a double-stranded, site-specific manner. The sequence is that of Lon protease from Brucella suis biovar 1 (strain 1330).